Consider the following 318-residue polypeptide: Glycine--tRNA ligase alpha subunit (318 aa).

This sequence belongs to the class-II aminoacyl-tRNA synthetase family. As to quaternary structure, tetramer of two alpha and two beta subunits.

It localises to the cytoplasm. The enzyme catalyses tRNA(Gly) + glycine + ATP = glycyl-tRNA(Gly) + AMP + diphosphate. The polypeptide is Glycine--tRNA ligase alpha subunit (glyQ) (Moraxella catarrhalis (Branhamella catarrhalis)).